The primary structure comprises 147 residues: Large ribosomal subunit protein bL9 (147 aa).

It belongs to the bacterial ribosomal protein bL9 family.

Functionally, binds to the 23S rRNA. The chain is Large ribosomal subunit protein bL9 from Sulfurovum sp. (strain NBC37-1).